We begin with the raw amino-acid sequence, 153 residues long: MESWLFLLGILAIAIVGKNKSLIIGVSAVMVLKLIPQTQNFLKLLQTQGINWGVTVISAAIMVPIATGEIGFKELLNVIKSPAGWIAIGCGVLVAVLSAKGVGLLAMSPEMTVALVFGTIIGVVFLKGIAAGPVIASGLTYVILTVFNLVPGH.

A run of 4 helical transmembrane segments spans residues 4–24, 52–72, 85–105, and 115–135; these read WLFL…SLII, WGVT…EIGF, WIAI…VGLL, and LVFG…GPVI.

The protein belongs to the UPF0756 family.

It localises to the cell membrane. This Lacticaseibacillus paracasei (strain ATCC 334 / BCRC 17002 / CCUG 31169 / CIP 107868 / KCTC 3260 / NRRL B-441) (Lactobacillus paracasei) protein is UPF0756 membrane protein LSEI_1366.